Here is a 312-residue protein sequence, read N- to C-terminus: Olfactory receptor 6C70 (312 aa).

Residues 1–22 (MKNHTRQIEFILLGLTDNSQLQ) lie on the Extracellular side of the membrane. Asparagine 3 carries N-linked (GlcNAc...) asparagine glycosylation. The chain crosses the membrane as a helical span at residues 23 to 43 (IVIFLFLLLNCVLSMIGNFTI). The Cytoplasmic segment spans residues 44–63 (IALILLDSQLKTPMYFFLRN). A helical transmembrane segment spans residues 64 to 84 (FSFLEISFTTACIPRFLITIV). At 85–95 (TREKTISCNGC) the chain is on the extracellular side. Cysteine 95 and cysteine 177 form a disulfide bridge. Residues 96–116 (ISQLFFYIFLGVTEFFLLAAL) form a helical membrane-spanning segment. At 117–141 (SYDRYVAICKPLRYMSIMSNKVCYQ) the chain is on the cytoplasmic side. A helical transmembrane segment spans residues 142–162 (LVFSSWVTGFLIIFTPLILGL). Residues 163-194 (NLDFCASNIIDHFICDISLILQLSCSDTHLLE) lie on the Extracellular side of the membrane. The chain crosses the membrane as a helical span at residues 195-215 (LIAFLLAVMTLIVTLFLVILS). Over 216 to 237 (YSYIIKTILKFPSAQQKKKAFS) the chain is Cytoplasmic. A helical transmembrane segment spans residues 238–258 (TCSSHMIVVSITYGSCMFIYI). Topologically, residues 259-272 (KPSANERVALSKGV) are extracellular. Residues 273 to 290 (TVLNTSVAPLLNPFIYTL) form a helical membrane-spanning segment. Residues 291–312 (RNQQVKQAFKAVFRKIFSASDK) are Cytoplasmic-facing.

Belongs to the G-protein coupled receptor 1 family.

The protein localises to the cell membrane. Odorant receptor. The protein is Olfactory receptor 6C70 (OR6C70) of Homo sapiens (Human).